Consider the following 36-residue polypeptide: Photosystem I reaction center subunit VIII (36 aa).

Residues 8-28 (SVLVPLVGLIFPAMAMASLFL) form a helical membrane-spanning segment.

It belongs to the PsaI family.

It localises to the plastid. Its subcellular location is the chloroplast thylakoid membrane. In terms of biological role, may help in the organization of the PsaL subunit. In Daucus carota (Wild carrot), this protein is Photosystem I reaction center subunit VIII.